The chain runs to 208 residues: F-box/kelch-repeat protein At2g43270 (208 aa).

The F-box domain maps to 1–44; it reads MIYVVPDLLEEIFLGLPLKSILRFKTVSKQWRSILESKSFAERR. A Kelch repeat occupies 149-200; that stretch reads RDKFNGSYKVVRMCFSPVEKCEVLDVETGEWSELNPPPNDIDVGRKSVCVNG.

In Arabidopsis thaliana (Mouse-ear cress), this protein is F-box/kelch-repeat protein At2g43270.